Reading from the N-terminus, the 254-residue chain is Mantle protein (254 aa).

An N-terminal signal peptide occupies residues 1-16; the sequence is MLAVLLFAALVATAYS.

Prismatic layer of shell (at protein level). Expressed primarily in the mantle with highest level in the outer epithelium of the mantle edge and lower level in the mantle pallium.

The protein localises to the secreted. The protein is Mantle protein of Margaritifera margaritifera (Freshwater pearl mussel).